A 340-amino-acid chain; its full sequence is Fructose-1,6-bisphosphatase, cytosolic (340 aa).

The Mg(2+) site is built by Glu71, Glu100, Asp121, Leu123, and Asp124. Residues 124–127 (DGSS), Asn215, Tyr247, Tyr267, and Lys277 contribute to the substrate site. Residue Glu283 participates in Mg(2+) binding.

The protein belongs to the FBPase class 1 family. The cofactor is Mg(2+).

Its subcellular location is the cytoplasm. The catalysed reaction is beta-D-fructose 1,6-bisphosphate + H2O = beta-D-fructose 6-phosphate + phosphate. In Solanum tuberosum (Potato), this protein is Fructose-1,6-bisphosphatase, cytosolic.